Reading from the N-terminus, the 60-residue chain is Defensin MGD-1 (60 aa).

Disulfide bonds link cysteine 4-cysteine 25, cysteine 10-cysteine 33, cysteine 14-cysteine 35, and cysteine 21-cysteine 38. Tryptophan 28 carries the 3-hydroxytryptophan modification. At cysteine 38 the chain carries Cysteine amide. Positions 39 to 60 (GGRREDVEDIFDIFDNEAADRF) are excised as a propeptide.

It belongs to the invertebrate defensin family. Type 2 subfamily. Post-translationally, the hydroxylation of the Trp-28 is not important for the antibacterial activity. Abundantly expressed in hemocytes.

It localises to the secreted. In terms of biological role, active against both Gram-positive and Gram-negative bacteria but is not cytotoxic towards human erythrocytes or protozoa. The sequence is that of Defensin MGD-1 (FH3) from Mytilus galloprovincialis (Mediterranean mussel).